The chain runs to 500 residues: C6 finger domain transcription factor sirZ (500 aa).

The zn(2)-C6 fungal-type DNA-binding region spans 28-54 (CNACHEVKLKCLGGQPCARCRNKQVEC). Over residues 79-88 (QAKAMSRPEE) the composition is skewed to basic and acidic residues. Disordered regions lie at residues 79-168 (QAKA…EQIS) and 302-332 (AGSFSTSGPGSSQEGSHFLSSRHSQSSGMYQ). The span at 135–147 (GAEEELLDQEERD) shows a compositional bias: acidic residues. The segment covering 154-165 (LVENPPNLNPLE) has biased composition (low complexity). Over residues 304–316 (SFSTSGPGSSQEG) the composition is skewed to polar residues. Residues 317 to 328 (SHFLSSRHSQSS) are compositionally biased toward low complexity.

The protein localises to the nucleus. Its function is as follows. Transcription factor that regulates sirodesmin production and contributes to virulence. Probably binds to the consensus motif TCGGN(3)CCGA found in the promoters of sirT, sirP, sirO, sirN, sirP, sirB, sirR, sirJ and sirQ. The polypeptide is C6 finger domain transcription factor sirZ (Leptosphaeria maculans (Blackleg fungus)).